Here is a 273-residue protein sequence, read N- to C-terminus: Ciliary microtubule inner protein 2B (273 aa).

Disordered stretches follow at residues 59–85 (TLLPPIQSPRSPVISKGRLPPRRGHER) and 123–164 (RHGE…HASP). A compositionally biased stretch (basic and acidic residues) spans 123 to 159 (RHGEQESHQLPDGAKGEREVEEDQLREAEEPPLKQEL).

The protein belongs to the CIMIP2 family. Microtubule inner protein component of sperm flagellar doublet microtubules. In terms of tissue distribution, expressed in airway epithelial cells.

It localises to the cytoplasm. The protein localises to the cytoskeleton. Its subcellular location is the cilium axoneme. It is found in the flagellum axoneme. Its function is as follows. Microtubule inner protein (MIP) part of the dynein-decorated doublet microtubules (DMTs) in cilia axoneme, which is required for motile cilia beating. The chain is Ciliary microtubule inner protein 2B (Cimip2b) from Mus musculus (Mouse).